The sequence spans 405 residues: Formin-like protein 15a (405 aa).

Residues 1-31 (MSLVEISGSDAMAAPMPGRVPPPPPRPPPMP) form a disordered region. Residues 18-31 (GRVPPPPPRPPPMP) show a composition bias toward pro residues. The FH2 domain maps to 52–405 (FPRPAKKRAS…VCWFFVRLMI (354 aa)).

It belongs to the formin-like family. Class-II subfamily.

In Arabidopsis thaliana (Mouse-ear cress), this protein is Formin-like protein 15a (FH15A).